A 597-amino-acid chain; its full sequence is Gamma-terpinene synthase, chloroplastic (597 aa).

The transit peptide at Met1–Ser47 directs the protein to the chloroplast. Residues Asp350 and Asp354 each contribute to the Mn(2+) site. Residues Asp350–Asp354 carry the DDXXD motif motif. Homodimerization regions lie at residues Tyr356 to Leu362 and Glu428 to Leu464. Residues Asp494 and Glu502 each coordinate Mn(2+).

The protein belongs to the terpene synthase family. Homodimer. It depends on Mn(2+) as a cofactor. The cofactor is Mg(2+).

It is found in the plastid. Its subcellular location is the chloroplast. The catalysed reaction is (2E)-geranyl diphosphate = gamma-terpinene + diphosphate. It participates in secondary metabolite biosynthesis; terpenoid biosynthesis. Functionally, involved in the biosynthesis of phenolic monoterpenes natural products thymol and carvacrol which have a broad range of biological activities acting as antimicrobial compounds, insecticides, antioxidants and pharmaceutical agents. Monoterpene synthase which catalyzes the conversion of geranyl diphosphate (GPP) to gamma-terpinene. The protein is Gamma-terpinene synthase, chloroplastic of Thymus caespititius (Cretan thyme).